The sequence spans 231 residues: Cuticlin 2 (231 aa).

The signal sequence occupies residues 1–16 (MQKLIVFFTTIAAAQA). Repeat copies occupy residues 75-78 (AAPI), 79-82 (AAPA), 90-93 (AAPV), 105-108 (AAPI), 114-117 (AAPA), 121-124 (AAPV), 137-140 (AAPA), 153-156 (AAPA), 169-172 (AAPA), 192-195 (AAPA), 208-211 (AAPA), and 218-221 (AAPA). Residues 75 to 221 (AAPIAAPAGG…AGGYQAAAPA (147 aa)) form a 12 X 4 AA repeats of A-A-P-[AVI] region.

In terms of processing, tyrosine residues can be cross-linked in vitro, leading to the formation of insoluble high molecular-weight complexes.

Its subcellular location is the secreted. Component of the insoluble part of the cuticles. The polypeptide is Cuticlin 2 (Caenorhabditis elegans).